A 357-amino-acid polypeptide reads, in one-letter code: Mating-type protein MAT-1 (357 aa).

The segment at residues 53 to 108 (RAKRPLNAFMAFRTYYLKLFPDTQQKNASGFLTQLWGGDPHRNKWALIAKVYSFLR) is a DNA-binding region (alpha box).

It belongs to the MATALPHA1 family.

It is found in the nucleus. Mating type proteins are sequence specific DNA-binding proteins that act as master switches in fungal differentiation by controlling gene expression in a cell type-specific fashion. Transcriptional activator that induces the transcription of alpha-specific genes. The chain is Mating-type protein MAT-1 (MAT1) from Fusarium oxysporum (Fusarium vascular wilt).